A 444-amino-acid chain; its full sequence is RAC family serine/threonine-protein kinase homolog (444 aa).

Residues 5 to 100 (PIKHEGFLTK…WIEILINERE (96 aa)) enclose the PH domain. Positions 120–374 (FELLNLVGKG…PNLIKRHPFF (255 aa)) constitute a Protein kinase domain. Residues 126-134 (VGKGSFGKV) and lysine 149 contribute to the ATP site. Aspartate 243 serves as the catalytic Proton acceptor. At threonine 278 the chain carries Phosphothreonine. Residues 375–444 (RSIDWEQLFQ…TYVAESEHLR (70 aa)) form the AGC-kinase C-terminal domain.

Belongs to the protein kinase superfamily. AGC Ser/Thr protein kinase family. RAC subfamily.

The catalysed reaction is L-seryl-[protein] + ATP = O-phospho-L-seryl-[protein] + ADP + H(+). The enzyme catalyses L-threonyl-[protein] + ATP = O-phospho-L-threonyl-[protein] + ADP + H(+). In terms of biological role, predominantly involved during the aggregation to control cell polarity and chemotaxis. Phosphorylates talB, gefN, gefS, PI4P 5-kinase and gacQ. This chain is RAC family serine/threonine-protein kinase homolog (pkbA), found in Dictyostelium discoideum (Social amoeba).